The chain runs to 471 residues: MEADESGISLPSGPDGRKRRVSYFYEPTIGDYYYGQGHPMKPHRIRMAHSLIIHYHLHRRLEISRPSLADASDIGRFHSPEYVDFLASVSPESMGDPSAARNLRRFNVGEDCPVFDGLFDFCRASAGGSIGAAVKLNRQDADIAINWGGGLHHAKKSEASGFCYVNDIVLGILELLKMFKRVLYIDIDVHHGDGVEEAFYTTDRVMTVSFHKFGDFFPGTGHIRDVGAEKGKYYALNVPLNDGMDDESFRSLFRPLIQKVMEVYQPEAVVLQCGADSLSGDRLGCFNLSVKGHADCLRFLRSYNVPLMVLGGGGYTIRNVARCWCYETAVAVGVEPDNKLPYNEYFEYFGPDYTLHVDPSPMENLNTPKDMERIRNTLLEQLSGLIHAPSVQFQHTPPVNRVLDEPEDDMETRPKPRIWSGTATYESDSDDDDKPLHGYSCRGGATTDRDSTGEDEMDDDNPEPDVNPPSS.

Residue methionine 1 is modified to N-acetylmethionine. Residues 20 to 333 (RVSYFYEPTI…WCYETAVAVG (314 aa)) are histone deacetylase. Histidine 153 (proton donor/acceptor) is an active-site residue. Aspartate 188, histidine 190, and aspartate 276 together coordinate Zn(2+). The interval 389–471 (PSVQFQHTPP…PEPDVNPPSS (83 aa)) is disordered. The span at 453–463 (GEDEMDDDNPE) shows a compositional bias: acidic residues.

The protein belongs to the histone deacetylase family. HD type 1 subfamily. As to quaternary structure, interacts with Coi1, which functions in an SCF complex that recruits regulators for ubiquitination. Interacts with AHL22. Interacts with AS1. Part of the AS1 repressor complex composed of AS1, LBD6/AS2 and HDA6. Binds to EBS and SHL. Interacts with MBD6. Interacts with HDA5. Interacts with FLD. Zn(2+) serves as cofactor. As to expression, not detected in leaves, stems, flowers and young siliques.

Its subcellular location is the nucleus. The protein resides in the nucleolus. It catalyses the reaction N(6)-acetyl-L-lysyl-[histone] + H2O = L-lysyl-[histone] + acetate. With respect to regulation, inhibited by trichostatin A. Responsible for the deacetylation of lysine residues on the N-terminal part of the core histones (H2A, H2B, H3 and H4). Might remove acetyl residues only from specific targets, such as rDNA repeats or complex transgenes. Histone deacetylation gives a tag for epigenetic repression and plays an important role in transcriptional regulation, cell cycle progression and developmental events. Histone deacetylases act via the formation of large multiprotein complexes. Required for rRNA gene silencing in nucleolar dominance. Plays a role in transgene silencing, but this effect seems to bee independent of the histone deacetylase activity. Part of the AS1 repressor complex to regulate the KNOX expression in leaf development. Binds to KNAT1, KNAT2, and KNATM chromatin. Involved in the regulation of flowering time. Forms a histone deacetylase complex with HDA5, FLD and MSI4/FVE that represses FLC gene expression to control flowering time. The chain is Histone deacetylase 6 from Arabidopsis thaliana (Mouse-ear cress).